Here is a 125-residue protein sequence, read N- to C-terminus: NADPH-dependent 7-cyano-7-deazaguanine reductase (125 aa).

Residue C41 is the Thioimide intermediate of the active site. D48 serves as the catalytic Proton donor. Residues 63–65 and 82–83 contribute to the substrate site; these read VEL and HE.

The protein belongs to the GTP cyclohydrolase I family. QueF type 1 subfamily.

Its subcellular location is the cytoplasm. The enzyme catalyses 7-aminomethyl-7-carbaguanine + 2 NADP(+) = 7-cyano-7-deazaguanine + 2 NADPH + 3 H(+). The protein operates within tRNA modification; tRNA-queuosine biosynthesis. Catalyzes the NADPH-dependent reduction of 7-cyano-7-deazaguanine (preQ0) to 7-aminomethyl-7-deazaguanine (preQ1). This is NADPH-dependent 7-cyano-7-deazaguanine reductase from Sulfurimonas denitrificans (strain ATCC 33889 / DSM 1251) (Thiomicrospira denitrificans (strain ATCC 33889 / DSM 1251)).